Reading from the N-terminus, the 117-residue chain is Large ribosomal subunit protein bL20c (117 aa).

The protein belongs to the bacterial ribosomal protein bL20 family.

Its subcellular location is the plastid. It is found in the chloroplast. Its function is as follows. Binds directly to 23S ribosomal RNA and is necessary for the in vitro assembly process of the 50S ribosomal subunit. It is not involved in the protein synthesizing functions of that subunit. This Morus indica (Mulberry) protein is Large ribosomal subunit protein bL20c.